We begin with the raw amino-acid sequence, 734 residues long: Photosystem I P700 chlorophyll a apoprotein A2 (734 aa).

The next 8 helical transmembrane spans lie at 46 to 69 (IFASHFGQLAIIFLWTSGNLFHVA), 135 to 158 (LYTGALFLLFLSAISLIAGWLHLQ), 175 to 199 (LNHHLSGLFGVSSLAWTGHLVHVAI), 273 to 291 (IAHHHLAIAFIFLVAGHMY), 330 to 353 (IHFQLGLALASLGVITSLVAQHMY), 369 to 395 (AALYTHHQYIAGFIMTGAFAHGAIFFI), 417 to 439 (AIISHLSWASLFLGFHTLGLYVH), and 517 to 535 (FLVHHAIALGLHTTTLILV). Positions 559 and 568 each coordinate [4Fe-4S] cluster. The next 2 membrane-spanning stretches (helical) occupy residues 575–596 (AFYLAVFWMLNTIGWVTFYWHW) and 643–665 (LSVWAWMFLFGHLVWATGFMFLI). Positions 654, 662, and 670 each coordinate chlorophyll a. Residue tryptophan 671 participates in phylloquinone binding. A helical membrane pass occupies residues 707–727 (LVGLAHFSVGYIFTYAAFLIA).

The protein belongs to the PsaA/PsaB family. The PsaA/B heterodimer binds the P700 chlorophyll special pair and subsequent electron acceptors. PSI consists of a core antenna complex that captures photons, and an electron transfer chain that converts photonic excitation into a charge separation. The eukaryotic PSI reaction center is composed of at least 11 subunits. P700 is a chlorophyll a/chlorophyll a' dimer, A0 is one or more chlorophyll a, A1 is one or both phylloquinones and FX is a shared 4Fe-4S iron-sulfur center. serves as cofactor.

It localises to the plastid. The protein localises to the chloroplast thylakoid membrane. The enzyme catalyses reduced [plastocyanin] + hnu + oxidized [2Fe-2S]-[ferredoxin] = oxidized [plastocyanin] + reduced [2Fe-2S]-[ferredoxin]. PsaA and PsaB bind P700, the primary electron donor of photosystem I (PSI), as well as the electron acceptors A0, A1 and FX. PSI is a plastocyanin-ferredoxin oxidoreductase, converting photonic excitation into a charge separation, which transfers an electron from the donor P700 chlorophyll pair to the spectroscopically characterized acceptors A0, A1, FX, FA and FB in turn. Oxidized P700 is reduced on the lumenal side of the thylakoid membrane by plastocyanin. This chain is Photosystem I P700 chlorophyll a apoprotein A2, found in Eucalyptus globulus subsp. globulus (Tasmanian blue gum).